The sequence spans 425 residues: Type II secretion system protein L (425 aa).

The Cytoplasmic segment spans residues 1 to 273 (MKIAGKWKRK…DKAWQNTLLP (273 aa)). A helical transmembrane segment spans residues 274–290 (WRGVGIAFACYLLLVVA). Residues 291-425 (DAGWAHYQLY…EGRLTLRSQQ (135 aa)) lie on the Periplasmic side of the membrane.

Belongs to the GSP L family. As to quaternary structure, type II secretion system is composed of four main components: the outer membrane complex, the inner membrane complex, the cytoplasmic secretion ATPase and the periplasm-spanning pseudopilus. Forms homodimers. Interacts with OutM/GspM. Interacts with OutE/GspE and OutF/GspF.

The protein resides in the cell inner membrane. Its function is as follows. Inner membrane component of the type II secretion system required for the energy-dependent secretion of extracellular factors such as proteases and toxins from the periplasm. Plays a role in the complex assembly and recruits OutM resulting in a stable complex in the inner membrane. Provides thus a link between the energy-providing OutE protein in the cytoplasm and the rest of the T2SS machinery. The protein is Type II secretion system protein L (outL) of Pectobacterium carotovorum subsp. carotovorum (Erwinia carotovora subsp. carotovora).